We begin with the raw amino-acid sequence, 413 residues long: Arginine biosynthesis bifunctional protein ArgJ (413 aa).

Substrate contacts are provided by T160, K186, T197, E277, N408, and T413. T197 acts as the Nucleophile in catalysis.

The protein belongs to the ArgJ family. As to quaternary structure, heterotetramer of two alpha and two beta chains.

It localises to the cytoplasm. It catalyses the reaction N(2)-acetyl-L-ornithine + L-glutamate = N-acetyl-L-glutamate + L-ornithine. The enzyme catalyses L-glutamate + acetyl-CoA = N-acetyl-L-glutamate + CoA + H(+). It participates in amino-acid biosynthesis; L-arginine biosynthesis; L-ornithine and N-acetyl-L-glutamate from L-glutamate and N(2)-acetyl-L-ornithine (cyclic): step 1/1. It functions in the pathway amino-acid biosynthesis; L-arginine biosynthesis; N(2)-acetyl-L-ornithine from L-glutamate: step 1/4. Its function is as follows. Catalyzes two activities which are involved in the cyclic version of arginine biosynthesis: the synthesis of N-acetylglutamate from glutamate and acetyl-CoA as the acetyl donor, and of ornithine by transacetylation between N(2)-acetylornithine and glutamate. This Prochlorococcus marinus (strain SARG / CCMP1375 / SS120) protein is Arginine biosynthesis bifunctional protein ArgJ.